Reading from the N-terminus, the 567-residue chain is Geranylgeranyl transferase type-2 subunit alpha (567 aa).

PFTA repeat units lie at residues 44–78 (LDES…RLEV), 88–122 (LVKA…RLPE), 124–158 (NWAR…QAAV), 159–193 (PPAE…QLHP), 207–241 (VLLK…RADP), and 363–397 (VLQS…ALDP). Serine 98 bears the Phosphoserine mark. LRR repeat units follow at residues 442–463 (DVRV…EQLL), 464–486 (LVTH…AALR), 487–508 (CLEV…TNLP), 509–530 (RLQE…QPLA), and 534–555 (RLVL…SEHL).

It belongs to the protein prenyltransferase subunit alpha family. As to quaternary structure, heterotrimer composed of RABGGTA, RABGGTB and CHM; within this trimer, RABGGTA and RABGGTB form the catalytic component B, while CHM (component A) mediates peptide substrate binding. The Rab GGTase dimer (RGGT) interacts with CHM (component A) prior to Rab protein binding; the association is stabilized by geranylgeranyl pyrophosphate (GGpp). The CHM:RGGT:Rab complex is destabilized by GGpp. Interacts with non-phosphorylated form of RAB8A; phosphorylation of RAB8A disrupts this interaction.

The enzyme catalyses geranylgeranyl diphosphate + L-cysteinyl-[protein] = S-geranylgeranyl-L-cysteinyl-[protein] + diphosphate. With respect to regulation, the enzymatic reaction requires the aid of a Rab escort protein (also called component A), such as CHM. Catalyzes the transfer of a geranylgeranyl moiety from geranylgeranyl diphosphate to both cysteines of Rab proteins with the C-terminal sequence -XXCC, -XCXC and -CCXX, such as RAB1A, RAB3A, RAB5A and RAB7A. This is Geranylgeranyl transferase type-2 subunit alpha (RABGGTA) from Sus scrofa (Pig).